We begin with the raw amino-acid sequence, 559 residues long: MVLDAVLARGRTVCKHNGLLILSVLSVIVGCLLGFFLRTQRLSPQEISYFQFPGELLMRMLKMLILPLVVSSLMSGLASLDAKTSSRLGILTVAYYLWTTFLAVVVGIIMVSIIHPGGAAQKETTEQSGKPVMSSADALLDLVRNMFPANLVEATFKQYRTKTTPVIKSPRGAAEEAPRRIVIYGVQEDNGSRVQNFALDLTPPPEIVYKSEPGTSDGMNVLGIVIFSATMGIMLGRMGDSGTPLVSFCQCLNESVMKIVAVAGWYFPFGIVFLIAGKILEMDDPKAVGKKLGFYAVTVVCGLVVHGLLILPLLYFLITKKNPIVFIRGVLQALLIALATSSSSATLPITFKCLLENNHIDRRIARFVLPVGATINMDGTALYEAVAAIFIAQVNNYELDFGQIITISITATAASIGAAGIPQAGLVTMVIVLTSVGLPTDDINLIIAVDWALDRFRTMINVLGDALAAGIMAHICRKDFAQDMGTEKLLPCETKPVTLQEIVAAQQNGCVKSVAEASELTLGPTCPHHIPVQVEQDEDPAAASLDHCTIEISELETNV.

Over methionine 1–histidine 16 the chain is Cytoplasmic. A run of 3 helical transmembrane segments spans residues asparagine 17–leucine 37, methionine 60–leucine 80, and alanine 94–isoleucine 114. Residues histidine 115–threonine 215 are Extracellular-facing. A glycan (N-linked (GlcNAc...) asparagine) is linked at asparagine 190. Residues serine 216–glycine 236 traverse the membrane as a helical segment. The N-linked (GlcNAc...) asparagine glycan is linked to asparagine 253. Transmembrane regions (helical) follow at residues isoleucine 259–isoleucine 279, threonine 298–isoleucine 318, glycine 329–isoleucine 349, valine 371–isoleucine 391, alanine 413–leucine 433, and phenylalanine 456–cysteine 476.

This sequence belongs to the dicarboxylate/amino acid:cation symporter (DAACS) (TC 2.A.23) family. SLC1A7 subfamily. In terms of assembly, interacts with the PDZ domains of DLG4. Expressed in retina, located in both cone and rod photoreceptor terminals and in axon terminals of rod bipolar cells.

It is found in the photoreceptor inner segment membrane. The protein resides in the synaptic cell membrane. It catalyses the reaction K(+)(in) + L-glutamate(out) + 3 Na(+)(out) + H(+)(out) = K(+)(out) + L-glutamate(in) + 3 Na(+)(in) + H(+)(in). The catalysed reaction is K(+)(in) + L-aspartate(out) + 3 Na(+)(out) + H(+)(out) = K(+)(out) + L-aspartate(in) + 3 Na(+)(in) + H(+)(in). It carries out the reaction D-aspartate(out) + K(+)(in) + 3 Na(+)(out) + H(+)(out) = D-aspartate(in) + K(+)(out) + 3 Na(+)(in) + H(+)(in). In terms of biological role, sodium-dependent, high-affinity amino acid transporter that mediates the uptake of L-glutamate and also L-aspartate and D-aspartate. Functions as a symporter that transports one amino acid molecule together with two or three Na(+) ions and one proton, in parallel with the counter-transport of one K(+) ion. Acts primarily as an inhibitory glutamate-gated chloride channel being a major inhibitory presynaptic receptor at mammalian rod bipolar cell axon terminals. Glutamate binding gates a large Cl(-) conductance that mediates inhibition, affecting visual processing in the retina. In Mus musculus (Mouse), this protein is Excitatory amino acid transporter 5.